Here is a 123-residue protein sequence, read N- to C-terminus: Small ribosomal subunit protein uS13 (123 aa).

Residues 95 to 123 form a disordered region; that stretch reads GLPVRGQSSKTNARTRKGPRRSVMSRKKK. Residues 107 to 123 show a composition bias toward basic residues; the sequence is ARTRKGPRRSVMSRKKK.

This sequence belongs to the universal ribosomal protein uS13 family. In terms of assembly, part of the 30S ribosomal subunit. Forms a loose heterodimer with protein S19. Forms two bridges to the 50S subunit in the 70S ribosome.

Located at the top of the head of the 30S subunit, it contacts several helices of the 16S rRNA. In the 70S ribosome it contacts the 23S rRNA (bridge B1a) and protein L5 of the 50S subunit (bridge B1b), connecting the 2 subunits; these bridges are implicated in subunit movement. Contacts the tRNAs in the A and P-sites. The chain is Small ribosomal subunit protein uS13 from Maridesulfovibrio salexigens (strain ATCC 14822 / DSM 2638 / NCIMB 8403 / VKM B-1763) (Desulfovibrio salexigens).